Consider the following 63-residue polypeptide: Large ribosomal subunit protein uL29 (63 aa).

It belongs to the universal ribosomal protein uL29 family.

The protein is Large ribosomal subunit protein uL29 of Yersinia pseudotuberculosis serotype O:1b (strain IP 31758).